The sequence spans 509 residues: Maturase K (509 aa).

The protein belongs to the intron maturase 2 family. MatK subfamily.

It is found in the plastid. The protein localises to the chloroplast. In terms of biological role, usually encoded in the trnK tRNA gene intron. Probably assists in splicing its own and other chloroplast group II introns. In Anthocercis angustifolia (Narrow-leaf ray-flower), this protein is Maturase K.